A 547-amino-acid chain; its full sequence is ATP synthase subunit alpha (547 aa).

Residue 173–180 (GDRATGKT) participates in ATP binding. The interval 526 to 547 (PEAEALADEDVEQEQIVRQKRG) is disordered. Residues 528-538 (AEALADEDVEQ) show a composition bias toward acidic residues.

It belongs to the ATPase alpha/beta chains family. In terms of assembly, F-type ATPases have 2 components, CF(1) - the catalytic core - and CF(0) - the membrane proton channel. CF(1) has five subunits: alpha(3), beta(3), gamma(1), delta(1), epsilon(1). CF(0) has three main subunits: a(1), b(2) and c(9-12). The alpha and beta chains form an alternating ring which encloses part of the gamma chain. CF(1) is attached to CF(0) by a central stalk formed by the gamma and epsilon chains, while a peripheral stalk is formed by the delta and b chains.

Its subcellular location is the cell membrane. It catalyses the reaction ATP + H2O + 4 H(+)(in) = ADP + phosphate + 5 H(+)(out). Functionally, produces ATP from ADP in the presence of a proton gradient across the membrane. The alpha chain is a regulatory subunit. The polypeptide is ATP synthase subunit alpha (Nocardioides sp. (strain ATCC BAA-499 / JS614)).